A 203-amino-acid polypeptide reads, in one-letter code: Small ribosomal subunit protein uS4 (203 aa).

Residues Arg-93–Ala-153 form the S4 RNA-binding domain.

This sequence belongs to the universal ribosomal protein uS4 family. As to quaternary structure, part of the 30S ribosomal subunit. Contacts protein S5. The interaction surface between S4 and S5 is involved in control of translational fidelity.

In terms of biological role, one of the primary rRNA binding proteins, it binds directly to 16S rRNA where it nucleates assembly of the body of the 30S subunit. Functionally, with S5 and S12 plays an important role in translational accuracy. This chain is Small ribosomal subunit protein uS4, found in Chlorobium phaeobacteroides (strain BS1).